A 619-amino-acid polypeptide reads, in one-letter code: E3 ubiquitin-protein ligase complex SLX5-SLX8 subunit SLX5 (619 aa).

The segment at 1-23 (MHSDTNGRTKSNNSPSDNNPNET) is disordered. The segment covering 11–21 (SNNSPSDNNPN) has biased composition (low complexity). Phosphoserine occurs at positions 14 and 29. The interval 63–90 (VRSDSRSRNSQRTHITASSERPDFQANN) is disordered. The span at 70-90 (RNSQRTHITASSERPDFQANN) shows a compositional bias: polar residues. The interval 201 to 335 (SRRQLLRRSA…ALFTEFRNQL (135 aa)) is EUC1 interaction domain.

Component of the heterodimeric SUMO-targeted ubiquitin ligase (STUbL) complex composed of SLX5 and SLX8. Interacts with sirtuin SIR2. Interacts with KAR9. Interacts with EUC1.

The protein resides in the nucleus. It is found in the chromosome. It localises to the centromere. The protein localises to the kinetochore. It catalyses the reaction S-ubiquitinyl-[E2 ubiquitin-conjugating enzyme]-L-cysteine + [acceptor protein]-L-lysine = [E2 ubiquitin-conjugating enzyme]-L-cysteine + N(6)-ubiquitinyl-[acceptor protein]-L-lysine.. It functions in the pathway protein modification; protein ubiquitination. Functionally, component of the SUMO-targeted ubiquitin ligase (STUbL) complex SLX5/SLX8 that mediates ubiquitination and subsequent desumoylation of sumoylated proteins and proteins containing SUMO-like domains for their degradation. The STUbL complex SLX5/SLX8 stimulates ubiquitin conjugating enzymes, including UBC1, UBC4, UBC5 and UBC13-MMS2, and mediates the proteolytic down-regulation of sumoylated proteins. The STUbL complex SLX5/SLX8 is involved in ubiquitin-mediated degradation of histone variant CSE4, preventing mislocalization to euchromatin. The complex plays an essential role in maintenance of chromosome stability and links SUMO-dependent ubiquitination to a centromere-specific function during mitosis. The complex is involved in proteolysis of spindle positioning protein KAR9 and ensures correct spindle function by regulating levels of microtubule-associated proteins. During replication, the complex helps prevent DNA lesions via recombination and has a role in localizing the DNA damage protein DCD2. The complex especially ubiquitinates the nuclease YEN1 and prevents persistent accumulation of a fraction of YEN1 associated with sites of activity in late G2/M and helps maintain the balance between pro- and anti-crossover pathways during homologous recombination. It is also involved in ubiquitin-mediated degradation of DNA repair proteins RAD52 and RAD57. Along with SIR2, promotes silencing of genes at telomeric or ribosomal DNA (rDNA) loci. Finally, the complex is recruited to distinct genomic hotspots of non-H2B protein ubiquitination (ub-hotspots) by the sumoylated transcription factor-like protein EUC1 where it ubiquitinates EUC1 and presumably other targets. The chain is E3 ubiquitin-protein ligase complex SLX5-SLX8 subunit SLX5 (SLX5) from Saccharomyces cerevisiae (strain ATCC 204508 / S288c) (Baker's yeast).